Consider the following 60-residue polypeptide: Large ribosomal subunit protein uL30 (60 aa).

The protein belongs to the universal ribosomal protein uL30 family. As to quaternary structure, part of the 50S ribosomal subunit.

The sequence is that of Large ribosomal subunit protein uL30 from Salinispora tropica (strain ATCC BAA-916 / DSM 44818 / JCM 13857 / NBRC 105044 / CNB-440).